A 302-amino-acid polypeptide reads, in one-letter code: Melibiose operon regulatory protein (302 aa).

An HTH araC/xylS-type domain is found at 194-292 (SQMLGFIAEN…GMSPQQYRKL (99 aa)). 2 DNA-binding regions (H-T-H motif) span residues 211–232 (NDVA…QRVM) and 259–282 (ILDI…GKYV).

Functionally, transcription activator for the expression of the melAB operon. MelR binds at two sites located upstream of the melAB transcription site. This is Melibiose operon regulatory protein (melR) from Escherichia coli O6:H1 (strain CFT073 / ATCC 700928 / UPEC).